The sequence spans 68 residues: Beta-defensin 1 (68 aa).

Residues 1 to 21 form the signal peptide; the sequence is MRTSYLLLFTLCLLLSEMASG. The propeptide occupies 22-32; that stretch reads GNFLTGLGHRS. Intrachain disulfides connect C37-C66, C44-C59, and C49-C67.

Belongs to the beta-defensin family. As to quaternary structure, monomer. Homodimer.

It is found in the secreted. The protein localises to the membrane. Has bactericidal activity. May act as a ligand for C-C chemokine receptor CCR6. Positively regulates the sperm motility and bactericidal activity in a CCR6-dependent manner. Binds to CCR6 and triggers Ca2+ mobilization in the sperm which is important for its motility. The polypeptide is Beta-defensin 1 (DEFB1) (Pongo pygmaeus (Bornean orangutan)).